Consider the following 339-residue polypeptide: Glycerol-3-phosphate dehydrogenase [NAD(P)+] (339 aa).

4 residues coordinate NADPH: serine 15, tyrosine 16, histidine 36, and lysine 110. Sn-glycerol 3-phosphate is bound by residues lysine 110, glycine 139, and threonine 141. Alanine 143 serves as a coordination point for NADPH. 5 residues coordinate sn-glycerol 3-phosphate: lysine 195, aspartate 248, serine 258, arginine 259, and asparagine 260. The Proton acceptor role is filled by lysine 195. NADPH is bound at residue arginine 259. Valine 283 and glutamate 285 together coordinate NADPH.

This sequence belongs to the NAD-dependent glycerol-3-phosphate dehydrogenase family.

The protein localises to the cytoplasm. The catalysed reaction is sn-glycerol 3-phosphate + NAD(+) = dihydroxyacetone phosphate + NADH + H(+). It carries out the reaction sn-glycerol 3-phosphate + NADP(+) = dihydroxyacetone phosphate + NADPH + H(+). The protein operates within membrane lipid metabolism; glycerophospholipid metabolism. Catalyzes the reduction of the glycolytic intermediate dihydroxyacetone phosphate (DHAP) to sn-glycerol 3-phosphate (G3P), the key precursor for phospholipid synthesis. The sequence is that of Glycerol-3-phosphate dehydrogenase [NAD(P)+] from Pectobacterium carotovorum subsp. carotovorum (strain PC1).